Here is a 223-residue protein sequence, read N- to C-terminus: 2-phospho-L-lactate guanylyltransferase (223 aa).

It belongs to the CofC family. In terms of assembly, homodimer.

The catalysed reaction is (2S)-2-phospholactate + GTP + H(+) = (2S)-lactyl-2-diphospho-5'-guanosine + diphosphate. It participates in cofactor biosynthesis; coenzyme F420 biosynthesis. Its function is as follows. Guanylyltransferase that catalyzes the activation of (2S)-2-phospholactate (2-PL) as (2S)-lactyl-2-diphospho-5'-guanosine, via the condensation of 2-PL with GTP. It is involved in the biosynthesis of coenzyme F420, a hydride carrier cofactor. The protein is 2-phospho-L-lactate guanylyltransferase of Methanothermobacter thermautotrophicus (strain ATCC 29096 / DSM 1053 / JCM 10044 / NBRC 100330 / Delta H) (Methanobacterium thermoautotrophicum).